A 431-amino-acid polypeptide reads, in one-letter code: Tol-Pal system protein TolB (431 aa).

The first 18 residues, Met1–Ala18, serve as a signal peptide directing secretion. The tract at residues Leu410–Gln431 is disordered.

This sequence belongs to the TolB family. In terms of assembly, the Tol-Pal system is composed of five core proteins: the inner membrane proteins TolA, TolQ and TolR, the periplasmic protein TolB and the outer membrane protein Pal. They form a network linking the inner and outer membranes and the peptidoglycan layer.

The protein resides in the periplasm. Functionally, part of the Tol-Pal system, which plays a role in outer membrane invagination during cell division and is important for maintaining outer membrane integrity. The protein is Tol-Pal system protein TolB of Myxococcus xanthus.